Reading from the N-terminus, the 328-residue chain is Phenylalanine--tRNA ligase alpha subunit (328 aa).

E245 serves as a coordination point for Mg(2+).

The protein belongs to the class-II aminoacyl-tRNA synthetase family. Phe-tRNA synthetase alpha subunit type 1 subfamily. In terms of assembly, tetramer of two alpha and two beta subunits. Mg(2+) serves as cofactor.

The protein localises to the cytoplasm. It catalyses the reaction tRNA(Phe) + L-phenylalanine + ATP = L-phenylalanyl-tRNA(Phe) + AMP + diphosphate + H(+). This chain is Phenylalanine--tRNA ligase alpha subunit, found in Helicobacter pylori (strain P12).